The sequence spans 132 residues: uncharacterized protein (132 aa).

3 helical membrane passes run 28–48, 59–79, and 106–126; these read LLRLISLCIPIIRPFSFLIYP, ILPSILPIIPFAISSSLLFSY, and LLVASFVYLPYRSPLPVVIEI.

The protein localises to the membrane. This is an uncharacterized protein from Schizosaccharomyces pombe (strain 972 / ATCC 24843) (Fission yeast).